The following is a 438-amino-acid chain: UDP-N-acetylmuramoylalanine--D-glutamate ligase (438 aa).

ATP is bound at residue 112–118 (GSNGKST).

It belongs to the MurCDEF family.

The protein localises to the cytoplasm. The catalysed reaction is UDP-N-acetyl-alpha-D-muramoyl-L-alanine + D-glutamate + ATP = UDP-N-acetyl-alpha-D-muramoyl-L-alanyl-D-glutamate + ADP + phosphate + H(+). The protein operates within cell wall biogenesis; peptidoglycan biosynthesis. In terms of biological role, cell wall formation. Catalyzes the addition of glutamate to the nucleotide precursor UDP-N-acetylmuramoyl-L-alanine (UMA). The protein is UDP-N-acetylmuramoylalanine--D-glutamate ligase of Salmonella typhi.